The primary structure comprises 250 residues: uncharacterized protein (250 aa).

The chain crosses the membrane as a helical span at residues 2–22 (ILRIIIFVIIILVVSLLLIYF).

It localises to the membrane. This is an uncharacterized protein from Acanthamoeba polyphaga (Amoeba).